We begin with the raw amino-acid sequence, 129 residues long: MAGRGKGKTSGKKAVSRSAKAGLQFPVGRIARYLKKGKYAERIGAGAPVYLAAVLEYLTAEVLELAGNAARDNKKNRIVPRHIQLAIRNDEELGKLLGEVTIASGGVLPNIHAVLLPKKTKGGKGEETA.

It belongs to the histone H2A family. As to quaternary structure, the nucleosome is a histone octamer containing two molecules each of H2A, H2B, H3 and H4 assembled in one H3-H4 heterotetramer and two H2A-H2B heterodimers. The octamer wraps approximately 147 bp of DNA.

The protein resides in the nucleus. It is found in the chromosome. In terms of biological role, core component of nucleosome. Nucleosomes wrap and compact DNA into chromatin, limiting DNA accessibility to the cellular machineries which require DNA as a template. Histones thereby play a central role in transcription regulation, DNA repair, DNA replication and chromosomal stability. DNA accessibility is regulated via a complex set of post-translational modifications of histones, also called histone code, and nucleosome remodeling. The polypeptide is Histone H2A (H2A-II) (Chlamydomonas reinhardtii (Chlamydomonas smithii)).